A 653-amino-acid chain; its full sequence is Fructose-1,6-bisphosphatase class 3 2 (653 aa).

Belongs to the FBPase class 3 family. Requires Mn(2+) as cofactor.

The catalysed reaction is beta-D-fructose 1,6-bisphosphate + H2O = beta-D-fructose 6-phosphate + phosphate. Its pathway is carbohydrate biosynthesis; gluconeogenesis. This chain is Fructose-1,6-bisphosphatase class 3 2, found in Clostridium beijerinckii (strain ATCC 51743 / NCIMB 8052) (Clostridium acetobutylicum).